The following is a 173-amino-acid chain: Alpha-crystallin A chain (173 aa).

At M1 the chain carries N-acetylmethionine. The interval 1 to 63 is required for complex formation with BFSP1 and BFSP2; that stretch reads MDVTIQHPWF…RTVLDSGISE (63 aa). Q6 is modified (deamidated glutamine; partial). S45 carries the post-translational modification Phosphoserine. Q50 carries the deamidated glutamine; partial modification. One can recognise a sHSP domain in the interval 52 to 162; the sequence is LFRTVLDSGI…GHSERAIPVS (111 aa). K70 carries the post-translational modification N6-acetyllysine. Q90 is modified (deamidated glutamine; partial). K99 bears the N6-acetyllysine mark. Zn(2+) contacts are provided by H100, E102, and H107. Residue S122 is modified to Phosphoserine. Residue N123 is modified to Deamidated asparagine; partial. The tract at residues 145 to 173 is disordered; the sequence is KVQSGLDAGHSERAIPVSREEKPSSAPSS. Residue Q147 is modified to Deamidated glutamine; partial. Over residues 153 to 167 the composition is skewed to basic and acidic residues; sequence GHSERAIPVSREEKP. H154 is a Zn(2+) binding site. S162 is a glycosylation site (O-linked (GlcNAc) serine).

Belongs to the small heat shock protein (HSP20) family. In terms of assembly, heteromer composed of three CRYAA and one CRYAB subunits. Inter-subunit bridging via zinc ions enhances stability, which is crucial as there is no protein turn over in the lens. Can also form homodimers and homotetramers (dimers of dimers) which serve as the building blocks of homooligomers. Within homooligomers, the zinc-binding motif is created from residues of 3 different molecules. His-100 and Glu-102 from one molecule are ligands of the zinc ion, and His-107 and His-154 residues from additional molecules complete the site with tetrahedral coordination geometry. Part of a complex required for lens intermediate filament formation composed of BFSP1, BFSP2 and CRYAA. In terms of processing, acetylation at Lys-70 may increase chaperone activity. Undergoes age-dependent proteolytical cleavage at the C-terminus.

It localises to the cytoplasm. The protein resides in the nucleus. Functionally, contributes to the transparency and refractive index of the lens. Acts as a chaperone, preventing aggregation of various proteins under a wide range of stress conditions. Required for the correct formation of lens intermediate filaments as part of a complex composed of BFSP1, BFSP2 and CRYAA. This is Alpha-crystallin A chain (CRYAA) from Ochotona princeps (Southern American pika).